Consider the following 91-residue polypeptide: Secretoglobin family 3A member 2 (91 aa).

The N-terminal stretch at 1 to 21 (MKLVSIFLLVTIGICGYSATA) is a signal peptide.

This sequence belongs to the secretoglobin family. UGRP subfamily. As to quaternary structure, homodimer; disulfide-linked. Monomer. Interacts with APOA1. In terms of tissue distribution, highly expressed in lung where it localizes to epithelial cells of the trachea, bronchus and bronchioles (at protein level). Expressed in club cells of the bronchioles. Also detected in the anterior and posterior lobes of the pituitary gland where it may localize to gonadotropic cells (at protein level). Not detected in other tissues tested.

The protein localises to the secreted. Secreted cytokine-like protein. Binds to the scavenger receptor MARCO. Can also bind to pathogens including the Gram-positive bacterium L.monocytogenes, the Gram-negative bacterium P.aeruginosa, and yeast. Strongly inhibits phospholipase A2 (PLA2G1B) activity. Seems to have anti-inflammatory effects in respiratory epithelium. Also has anti-fibrotic activity in lung. May play a role in fetal lung development and maturation. Promotes branching morphogenesis during early stages of lung development. In the pituitary, may inhibit production of follicle-stimulating hormone (FSH) and luteinizing hormone (LH). This is Secretoglobin family 3A member 2 (Scgb3a2) from Mus musculus (Mouse).